We begin with the raw amino-acid sequence, 82 residues long: DNA-directed RNA polymerase subunit Rpo5 (82 aa).

The protein belongs to the archaeal Rpo5/eukaryotic RPB5 RNA polymerase subunit family. In terms of assembly, part of the RNA polymerase complex.

The protein localises to the cytoplasm. The enzyme catalyses RNA(n) + a ribonucleoside 5'-triphosphate = RNA(n+1) + diphosphate. Its function is as follows. DNA-dependent RNA polymerase (RNAP) catalyzes the transcription of DNA into RNA using the four ribonucleoside triphosphates as substrates. This chain is DNA-directed RNA polymerase subunit Rpo5, found in Pyrococcus horikoshii (strain ATCC 700860 / DSM 12428 / JCM 9974 / NBRC 100139 / OT-3).